The following is a 686-amino-acid chain: Translation initiation factor IF-2 (686 aa).

The interval 54–105 is disordered; the sequence is KPSVADEFEVEEKVVRSKKNSNKKKKKGKGNEDKRQENFAGRQQTQTVETPD. The segment covering 69–81 has biased composition (basic residues); the sequence is RSKKNSNKKKKKG. Positions 188–357 constitute a tr-type G domain; sequence ERPAVVTIMG…LLVSEVEEYK (170 aa). The tract at residues 197 to 204 is G1; that stretch reads GHVDHGKT. 197–204 serves as a coordination point for GTP; it reads GHVDHGKT. The interval 222-226 is G2; that stretch reads GITQH. Residues 243–246 form a G3 region; the sequence is DTPG. GTP-binding positions include 243-247 and 297-300; these read DTPGH and NKMD. Positions 297–300 are G4; sequence NKMD. The G5 stretch occupies residues 333–335; it reads SAI.

It belongs to the TRAFAC class translation factor GTPase superfamily. Classic translation factor GTPase family. IF-2 subfamily.

The protein resides in the cytoplasm. One of the essential components for the initiation of protein synthesis. Protects formylmethionyl-tRNA from spontaneous hydrolysis and promotes its binding to the 30S ribosomal subunits. Also involved in the hydrolysis of GTP during the formation of the 70S ribosomal complex. This chain is Translation initiation factor IF-2, found in Bacillus cereus (strain AH187).